The following is a 125-amino-acid chain: Type II secretion system protein I (125 aa).

The propeptide at 1–5 is leader sequence; the sequence is MKQQG. Position 6 is an N-methylmethionine (Met6). A helical transmembrane segment spans residues 6–26; sequence MTLLEVMVALVIFALAGLTVL.

It belongs to the GSP I family. As to quaternary structure, type II secretion is composed of four main components: the outer membrane complex, the inner membrane complex, the cytoplasmic secretion ATPase and the periplasm-spanning pseudopilus. Interacts with core component OutG. Cleaved by prepilin peptidase. Post-translationally, methylated by prepilin peptidase at the amino group of the N-terminal methionine once the leader sequence is cleaved by prepilin peptidase.

The protein resides in the cell inner membrane. Component of the type II secretion system required for the energy-dependent secretion of extracellular factors such as proteases and toxins from the periplasm. Part of the pseudopilus tip complex that is critical for the recognition and binding of secretion substrates. This Dickeya chrysanthemi (Pectobacterium chrysanthemi) protein is Type II secretion system protein I (outI).